The following is a 157-amino-acid chain: Transcription elongation factor GreA (157 aa).

Residues 1 to 60 (MEKVPMTSAGFAALGEELKKRQSEDRPRIIEHIAEARSHGDLSENAEYHAAKEEQSHNEG) form a disordered region. The segment covering 16–60 (EELKKRQSEDRPRIIEHIAEARSHGDLSENAEYHAAKEEQSHNEG) has biased composition (basic and acidic residues). A coiled-coil region spans residues 46-73 (AEYHAAKEEQSHNEGRIAELEDKLARAD).

It belongs to the GreA/GreB family.

Functionally, necessary for efficient RNA polymerase transcription elongation past template-encoded arresting sites. The arresting sites in DNA have the property of trapping a certain fraction of elongating RNA polymerases that pass through, resulting in locked ternary complexes. Cleavage of the nascent transcript by cleavage factors such as GreA or GreB allows the resumption of elongation from the new 3'terminus. GreA releases sequences of 2 to 3 nucleotides. In Bradyrhizobium diazoefficiens (strain JCM 10833 / BCRC 13528 / IAM 13628 / NBRC 14792 / USDA 110), this protein is Transcription elongation factor GreA.